The sequence spans 147 residues: Small ribosomal subunit protein uS12 (147 aa).

The protein belongs to the universal ribosomal protein uS12 family. As to quaternary structure, part of the 30S ribosomal subunit.

Functionally, with S4 and S5 plays an important role in translational accuracy. Located at the interface of the 30S and 50S subunits. The chain is Small ribosomal subunit protein uS12 from Methanococcus vannielii (strain ATCC 35089 / DSM 1224 / JCM 13029 / OCM 148 / SB).